The following is a 388-amino-acid chain: DNA replication and repair protein RecF (388 aa).

An ATP-binding site is contributed by 30 to 37; sequence GNNAQGKS.

This sequence belongs to the RecF family.

It localises to the cytoplasm. Its function is as follows. The RecF protein is involved in DNA metabolism; it is required for DNA replication and normal SOS inducibility. RecF binds preferentially to single-stranded, linear DNA. It also seems to bind ATP. The protein is DNA replication and repair protein RecF of Picosynechococcus sp. (strain ATCC 27264 / PCC 7002 / PR-6) (Agmenellum quadruplicatum).